A 198-amino-acid chain; its full sequence is Cerebellin-4 (198 aa).

The N-terminal stretch at 1–24 (MGSARRALSVVPAVLLILVLPVWA) is a signal peptide. Asn-26 and Asn-85 each carry an N-linked (GlcNAc...) asparagine glycan. The region spanning 63 to 198 (AANSKVAFSA…TFSGFLVFPL (136 aa)) is the C1q domain.

Homohexamer; disulfide-linked homotrimers. The trimers are assembled via the globular C1q domains. The trimers associate via N-terminal cysteine residues to form disulfide-linked hexamers. May form oligomers with CBLN1, CBLN2 and CBLN3 prior to secretion. Once secreted, does not interact with other CBLN family members. Strongly interacts with DCC in a NTN1-displaceable fashion. Weakly binds to NRXN1 and NRXN2 long and short isoforms produced by alternative promoter usage. Interaction with NRXN3 short isoform is hardly detectable; no interaction at all with NRXN3 long isoform. Does not interact with NEO1, GRID1 and GRID2. In terms of processing, sialoglycoprotein. In terms of tissue distribution, expressed in brain with high levels in particular thalamic nuclei. In the thalamus, predominantly expressed in neurons within the parafascicular nucleus. Found in the hippocampus, mostly in the dendrites and somata of pyramidal neurons (at protein level). Very low or no expression in most other brain regions. Highly expressed in the ventral medial habenula.

The protein localises to the secreted. It localises to the synapse. Functionally, acts as a synaptic organizer in specific subsets of neurons in the brain. Essential for the formation and maintenance of inhibitory GABAergic synapses. Promotes the development of dendrite-targeting inhibitory GABAergic synapses made by somatostatin-positive interneurons. May contribute to the function of ventral medial habenula region of the brain implicated in the regulation of anxiety-related behaviors. May play a role in CBLN3 export from the endoplasmic reticulum and secretion. The sequence is that of Cerebellin-4 (Cbln4) from Mus musculus (Mouse).